A 1012-amino-acid chain; its full sequence is DNA polymerase catalytic subunit (1012 aa).

The disordered stretch occupies residues 1 to 31 (MDFFNPFIDPTRGGPRNTVRQPTPSQSPTVP). Positions 21-31 (QPTPSQSPTVP) are enriched in low complexity.

It belongs to the DNA polymerase type-B family. As to quaternary structure, forms a complex with the ssDNA-binding protein, the DNA polymerase processivity factor, and the alkaline exonuclease. Interacts with the putative helicase-primase complex subunit; this interaction may coordinate leading and lagging strand DNA synthesis at the replication fork.

The protein localises to the host nucleus. The enzyme catalyses DNA(n) + a 2'-deoxyribonucleoside 5'-triphosphate = DNA(n+1) + diphosphate. The catalysed reaction is Endonucleolytic cleavage to 5'-phosphomonoester.. In terms of biological role, replicates viral genomic DNA. The replication complex is composed of six viral proteins: the DNA polymerase, processivity factor, primase, primase-associated factor, helicase, and ssDNA-binding protein. Additionally, the polymerase contains an intrinsic ribonuclease H (RNase H) activity that specifically degrades RNA/DNA heteroduplexes or duplex DNA substrates in the 5' to 3' direction. Therefore, it can catalyze the excision of the RNA primers that initiate the synthesis of Okazaki fragments at a replication fork during viral DNA replication. The protein is DNA polymerase catalytic subunit (ORF9) of Human herpesvirus 8 type P (isolate GK18) (HHV-8).